Reading from the N-terminus, the 350-residue chain is MAFKLASSPHLKVQLQTQSVMRRVTLCALPGVAAQFYFFGWGVLVQVMLAITIALLSEAAVLKLRKRPIISTLSDNSAVLTALLIGVSIPSIAPWWVVVVGTIFAIVIVKHLYGGLGQNIFNPAMAAYVMLLISFPVQMTSWSVPLSLAQTPMDLSLTLNAIFGAMTPEKLSIYKYGIDGIAMATPLDTVKTDLSLGLTITESLSKTIFSDGFGVGWFWVNVAYLVGGLAMLKLKVIRWQISVGILAALFVCSSFGYLLSPDTHIGPLFQLFSGATMLAVFFIATDPVTAATSVRGRLLFGGLIGVLVYVIRTYGGYPDAFAFAILLANLCAPFIDYYIKPRSYGHRAGS.

4 helical membrane passes run phenylalanine 36–leucine 56, proline 68–serine 88, isoleucine 89–valine 109, and isoleucine 120–threonine 140. The residue at position 185 (threonine 185) is an FMN phosphoryl threonine. The next 5 helical transmembrane spans lie at glycine 212–leucine 232, tryptophan 239–leucine 259, isoleucine 265–threonine 285, alanine 291–isoleucine 311, and glycine 315–isoleucine 335.

The protein belongs to the NqrB/RnfD family. As to quaternary structure, the complex is composed of six subunits: RnfA, RnfB, RnfC, RnfD, RnfE and RnfG. The cofactor is FMN.

The protein resides in the cell inner membrane. Its function is as follows. Part of a membrane-bound complex that couples electron transfer with translocation of ions across the membrane. The polypeptide is Ion-translocating oxidoreductase complex subunit D (Shewanella piezotolerans (strain WP3 / JCM 13877)).